A 134-amino-acid polypeptide reads, in one-letter code: Small ribosomal subunit protein uS8c (134 aa).

As to quaternary structure, component of the chloroplast small ribosomal subunit (SSU). Mature 70S chloroplast ribosomes of higher plants consist of a small (30S) and a large (50S) subunit. The 30S small subunit contains 1 molecule of ribosomal RNA (16S rRNA) and 24 different proteins. The 50S large subunit contains 3 rRNA molecules (23S, 5S and 4.5S rRNA) and 33 different proteins.

The protein localises to the plastid. The protein resides in the chloroplast. In terms of biological role, component of the chloroplast ribosome (chloro-ribosome), a dedicated translation machinery responsible for the synthesis of chloroplast genome-encoded proteins, including proteins of the transcription and translation machinery and components of the photosynthetic apparatus. The chain is Small ribosomal subunit protein uS8c (rps8) from Spinacia oleracea (Spinach).